We begin with the raw amino-acid sequence, 132 residues long: uncharacterized protein (132 aa).

The next 3 membrane-spanning stretches (helical) occupy residues 19–39, 58–78, and 93–113; these read FTWI…FIFL, IGLR…VAVM, and LIAY…CAAL.

Belongs to the bacteriophage holin family. Cp-1 holin subfamily.

It localises to the cell membrane. This is an uncharacterized protein from Clostridium perfringens.